Reading from the N-terminus, the 344-residue chain is Follistatin (344 aa).

Residues 1–29 (MVRPRHQPGGLCLLLLLLCQFMEDRSAQA) form the signal peptide. Positions 30–103 (GNCWLRQAKN…TCDNVDCGPG (74 aa)) constitute a TB domain. 18 disulfides stabilise this stretch: cysteine 32–cysteine 55, cysteine 42–cysteine 88, cysteine 56–cysteine 91, cysteine 95–cysteine 106, cysteine 100–cysteine 116, cysteine 118–cysteine 150, cysteine 122–cysteine 143, cysteine 132–cysteine 164, cysteine 168–cysteine 179, cysteine 173–cysteine 189, cysteine 192–cysteine 225, cysteine 196–cysteine 218, cysteine 207–cysteine 239, cysteine 245–cysteine 256, cysteine 250–cysteine 267, cysteine 270–cysteine 302, cysteine 274–cysteine 295, and cysteine 284–cysteine 316. The Follistatin-like 1 domain maps to 94 to 117 (TCDNVDCGPGKKCRMNKKNKPRCV). Positions 112 to 166 (NKPRCVCAPDCSNITWKGPVCGLDGKTYRNECALLKARCKEQPELEVQYQGKCKK) constitute a Kazal-like 1 domain. The N-linked (GlcNAc...) asparagine glycan is linked to asparagine 124. Residues 167–190 (TCRDVNCPGSSTCVVDQTNNAYCV) enclose the Follistatin-like 2 domain. The region spanning 186-241 (NAYCVTCNRICPEPTSSEQYLCGNDGVTYSSACHLRKATCLLGRSIGLAYEGKCIK) is the Kazal-like 2 domain. Positions 244-268 (SCEDIQCTGGKKCLWDFKVGRGRCS) constitute a Follistatin-like 3 domain. In terms of domain architecture, Kazal-like 3 spans 264–318 (RGRCSLCDELCPDSKSEEPVCASDNATYASECAMKEAACSSGVLLEVKHSGSCNS). A glycan (N-linked (GlcNAc...) asparagine) is linked at asparagine 288. The tract at residues 314 to 344 (GSCNSISEDTEEEEEDEDQDYSFPISSILEW) is disordered. The segment covering 321 to 333 (EDTEEEEEDEDQD) has biased composition (acidic residues).

As to quaternary structure, interacts with GDF11. Interacts with activin A/INHBA. Interacts with myostatin/MSTN.

The protein resides in the secreted. The protein localises to the nucleus. It is found in the nucleolus. Its function is as follows. Multifunctional regulatory protein whose primary function is to antagonize members of the transforming growth factor beta (TGF-beta) superfamily including activin, myostatin, GDF11 or bone morphogenetic proteins (BMPs). Mechanistically, binds to these ligands in the extracellular space, blocking their type II receptor-binding site to inhibit downstream signaling. Plays an essential role in muscle fiber formation and growth both by preventing the repressive effects of myostatin and through SMAD3/AKT/mTOR signaling independently of myostatin. Also promotes neural differentiation by antagonizing the action BMP4. Acts as a specific inhibitor of the biosynthesis and secretion of pituitary follicle stimulating hormone (FSH) by sequestering activin A/INHBA. On the other hand, translocates into the nucleus where it down-regulates rRNA synthesis and ribosome biogenesis to maintain cellular energy homeostasis by binding to rDNA. This is Follistatin from Equus caballus (Horse).